The primary structure comprises 145 residues: Cell division protein SepF (145 aa).

It belongs to the SepF family. As to quaternary structure, homodimer. Interacts with FtsZ.

It localises to the cytoplasm. Cell division protein that is part of the divisome complex and is recruited early to the Z-ring. Probably stimulates Z-ring formation, perhaps through the cross-linking of FtsZ protofilaments. Its function overlaps with FtsA. This Lactobacillus acidophilus (strain ATCC 700396 / NCK56 / N2 / NCFM) protein is Cell division protein SepF.